Consider the following 855-residue polypeptide: Cone cGMP-specific 3',5'-cyclic phosphodiesterase subunit alpha' (855 aa).

GAF domains follow at residues Ser-70–Leu-219 and Asp-251–Leu-428. Residues Ser-92, Ser-116, Asp-164 to Thr-167, and Thr-171 each bind 3',5'-cyclic GMP. One can recognise a PDEase domain in the interval Glu-481 to Tyr-814. The active-site Proton donor is the His-557. A divalent metal cation is bound by residues His-561, His-597, Asp-598, and Asp-718. The interval Glu-823–Leu-855 is disordered. Cys-852 is modified (cysteine methyl ester). Residue Cys-852 is the site of S-geranylgeranyl cysteine attachment. Positions Leu-853–Leu-855 are cleaved as a propeptide — removed in mature form.

The protein belongs to the cyclic nucleotide phosphodiesterase family. In terms of assembly, composed of two alpha' subunits that are associated with 3 smaller proteins of 11, 13, and 15 kDa. It depends on a divalent metal cation as a cofactor.

It localises to the cell membrane. It carries out the reaction 3',5'-cyclic GMP + H2O = GMP + H(+). As cone-specific cGMP phosphodiesterase, it plays an essential role in light detection and cone phototransduction by rapidly decreasing intracellular levels of cGMP. This is Cone cGMP-specific 3',5'-cyclic phosphodiesterase subunit alpha' (PDE6C) from Bos taurus (Bovine).